A 120-amino-acid polypeptide reads, in one-letter code: Large ribosomal subunit protein uL22 (120 aa).

It belongs to the universal ribosomal protein uL22 family. Part of the 50S ribosomal subunit.

Its function is as follows. This protein binds specifically to 23S rRNA; its binding is stimulated by other ribosomal proteins, e.g. L4, L17, and L20. It is important during the early stages of 50S assembly. It makes multiple contacts with different domains of the 23S rRNA in the assembled 50S subunit and ribosome. In terms of biological role, the globular domain of the protein is located near the polypeptide exit tunnel on the outside of the subunit, while an extended beta-hairpin is found that lines the wall of the exit tunnel in the center of the 70S ribosome. The polypeptide is Large ribosomal subunit protein uL22 (Oenococcus oeni (strain ATCC BAA-331 / PSU-1)).